Reading from the N-terminus, the 270-residue chain is 4-hydroxy-tetrahydrodipicolinate reductase (270 aa).

Residues 11–16 and Glu-37 each bind NAD(+); that span reads GASGRM. Arg-38 contributes to the NADP(+) binding site. Residues 101–103 and 125–128 each bind NAD(+); these read GTT and SPNM. His-158 serves as the catalytic Proton donor/acceptor. His-159 is a binding site for (S)-2,3,4,5-tetrahydrodipicolinate. Lys-162 (proton donor) is an active-site residue. 168–169 lines the (S)-2,3,4,5-tetrahydrodipicolinate pocket; sequence GT.

Belongs to the DapB family.

The protein localises to the cytoplasm. It carries out the reaction (S)-2,3,4,5-tetrahydrodipicolinate + NAD(+) + H2O = (2S,4S)-4-hydroxy-2,3,4,5-tetrahydrodipicolinate + NADH + H(+). It catalyses the reaction (S)-2,3,4,5-tetrahydrodipicolinate + NADP(+) + H2O = (2S,4S)-4-hydroxy-2,3,4,5-tetrahydrodipicolinate + NADPH + H(+). Its pathway is amino-acid biosynthesis; L-lysine biosynthesis via DAP pathway; (S)-tetrahydrodipicolinate from L-aspartate: step 4/4. Functionally, catalyzes the conversion of 4-hydroxy-tetrahydrodipicolinate (HTPA) to tetrahydrodipicolinate. This chain is 4-hydroxy-tetrahydrodipicolinate reductase, found in Shewanella denitrificans (strain OS217 / ATCC BAA-1090 / DSM 15013).